The chain runs to 329 residues: Endochitinase A (329 aa).

Positions 1-23 are cleaved as a signal peptide; sequence MRLCKFTALSSLLFSLLLLSASA. One can recognise a Chitin-binding type-1 domain in the interval 24 to 65; that stretch reads EQCGSQAGGARCPSGLCCSKFGWCGNTNDYCGPGNCQSQCPG. Intrachain disulfides connect C26–C41, C35–C47, C40–C54, and C59–C63. P67 carries the 4-hydroxyproline; partial modification. 4 positions are modified to 4-hydroxyproline: P69, P71, P72, and P74. Residue P75 is modified to 4-hydroxyproline; partial. Cystine bridges form between C101–C163, C175–C183, and C282–C314. The active-site Proton donor is E145. The propeptide at 323 to 329 is removed in mature form; the sequence is GLLVDTM.

The protein belongs to the glycosyl hydrolase 19 family. Chitinase class I subfamily. The 4-hydroxyproline residues are not glycosylated in this plant vacuolar protein.

It localises to the vacuole. It carries out the reaction Random endo-hydrolysis of N-acetyl-beta-D-glucosaminide (1-&gt;4)-beta-linkages in chitin and chitodextrins.. Its function is as follows. Defense against chitin-containing fungal pathogens. This chain is Endochitinase A (CHN48), found in Nicotiana tabacum (Common tobacco).